A 144-amino-acid chain; its full sequence is Small ribosomal subunit protein eS12z (144 aa).

S2 is subject to N-acetylserine.

Belongs to the eukaryotic ribosomal protein eS12 family.

The chain is Small ribosomal subunit protein eS12z (RPS12A) from Arabidopsis thaliana (Mouse-ear cress).